A 115-amino-acid polypeptide reads, in one-letter code: Tyrosine-protein phosphatase 23 (115 aa).

The region spanning 1–115 (WMMIVEQKCR…EIGGDAPMVV (115 aa)) is the Tyrosine-protein phosphatase domain. Asp-83 serves as a coordination point for substrate.

It belongs to the protein-tyrosine phosphatase family.

The enzyme catalyses O-phospho-L-tyrosyl-[protein] + H2O = L-tyrosyl-[protein] + phosphate. The sequence is that of Tyrosine-protein phosphatase 23 (STY-23) from Styela plicata (Wrinkled sea squirt).